The chain runs to 495 residues: Putative aldehyde dehydrogenase AldA (495 aa).

212–218 (GKGSESG) serves as a coordination point for NAD(+). Residues Glu-256 and Cys-290 contribute to the active site.

This sequence belongs to the aldehyde dehydrogenase family.

It catalyses the reaction an aldehyde + NAD(+) + H2O = a carboxylate + NADH + 2 H(+). In Staphylococcus aureus (strain bovine RF122 / ET3-1), this protein is Putative aldehyde dehydrogenase AldA (aldA).